A 312-amino-acid polypeptide reads, in one-letter code: Putative endo-1,4-beta-xylanase (312 aa).

The 301-residue stretch at 1–301 (MKQQYLLDYE…KPCFYSFLQA (301 aa)) folds into the GH10 domain. Glu104 functions as the Proton donor in the catalytic mechanism. The active-site Nucleophile is the Glu216.

Belongs to the glycosyl hydrolase 10 (cellulase F) family.

The enzyme catalyses Endohydrolysis of (1-&gt;4)-beta-D-xylosidic linkages in xylans.. It functions in the pathway glycan degradation; xylan degradation. Its function is as follows. Could be a xylanase. The polypeptide is Putative endo-1,4-beta-xylanase (Caldicellulosiruptor saccharolyticus (Caldocellum saccharolyticum)).